A 525-amino-acid polypeptide reads, in one-letter code: GMP synthase [glutamine-hydrolyzing] (525 aa).

Residues 8-207 form the Glutamine amidotransferase type-1 domain; that stretch reads KILILDFGSQ…ALDICQCDAN (200 aa). The active-site Nucleophile is Cys85. Active-site residues include His181 and Glu183. One can recognise a GMPS ATP-PPase domain in the interval 208-400; it reads WKPASIIEDA…LGLPYDMLYR (193 aa). Position 235–241 (235–241) interacts with ATP; sequence SGGVDSS.

In terms of assembly, homodimer.

It carries out the reaction XMP + L-glutamine + ATP + H2O = GMP + L-glutamate + AMP + diphosphate + 2 H(+). It functions in the pathway purine metabolism; GMP biosynthesis; GMP from XMP (L-Gln route): step 1/1. Catalyzes the synthesis of GMP from XMP. The sequence is that of GMP synthase [glutamine-hydrolyzing] from Shewanella woodyi (strain ATCC 51908 / MS32).